The chain runs to 333 residues: 4-hydroxy-3-methylbut-2-enyl diphosphate reductase (333 aa).

Cysteine 34 contacts [4Fe-4S] cluster. (2E)-4-hydroxy-3-methylbut-2-enyl diphosphate contacts are provided by histidine 63 and histidine 96. Dimethylallyl diphosphate-binding residues include histidine 63 and histidine 96. Histidine 63 and histidine 96 together coordinate isopentenyl diphosphate. Cysteine 118 lines the [4Fe-4S] cluster pocket. Histidine 146 lines the (2E)-4-hydroxy-3-methylbut-2-enyl diphosphate pocket. Histidine 146 contributes to the dimethylallyl diphosphate binding site. Histidine 146 is an isopentenyl diphosphate binding site. Catalysis depends on glutamate 148, which acts as the Proton donor. A (2E)-4-hydroxy-3-methylbut-2-enyl diphosphate-binding site is contributed by threonine 186. Cysteine 216 serves as a coordination point for [4Fe-4S] cluster. (2E)-4-hydroxy-3-methylbut-2-enyl diphosphate contacts are provided by serine 244, serine 245, asparagine 246, and serine 289. 4 residues coordinate dimethylallyl diphosphate: serine 244, serine 245, asparagine 246, and serine 289. Isopentenyl diphosphate-binding residues include serine 244, serine 245, asparagine 246, and serine 289.

Belongs to the IspH family. [4Fe-4S] cluster serves as cofactor.

It catalyses the reaction isopentenyl diphosphate + 2 oxidized [2Fe-2S]-[ferredoxin] + H2O = (2E)-4-hydroxy-3-methylbut-2-enyl diphosphate + 2 reduced [2Fe-2S]-[ferredoxin] + 2 H(+). The enzyme catalyses dimethylallyl diphosphate + 2 oxidized [2Fe-2S]-[ferredoxin] + H2O = (2E)-4-hydroxy-3-methylbut-2-enyl diphosphate + 2 reduced [2Fe-2S]-[ferredoxin] + 2 H(+). Its pathway is isoprenoid biosynthesis; dimethylallyl diphosphate biosynthesis; dimethylallyl diphosphate from (2E)-4-hydroxy-3-methylbutenyl diphosphate: step 1/1. The protein operates within isoprenoid biosynthesis; isopentenyl diphosphate biosynthesis via DXP pathway; isopentenyl diphosphate from 1-deoxy-D-xylulose 5-phosphate: step 6/6. Functionally, catalyzes the conversion of 1-hydroxy-2-methyl-2-(E)-butenyl 4-diphosphate (HMBPP) into a mixture of isopentenyl diphosphate (IPP) and dimethylallyl diphosphate (DMAPP). Acts in the terminal step of the DOXP/MEP pathway for isoprenoid precursor biosynthesis. The polypeptide is 4-hydroxy-3-methylbut-2-enyl diphosphate reductase (Mycobacterium sp. (strain JLS)).